The following is a 435-amino-acid chain: Tryptophan synthase beta chain (435 aa).

Lysine 92 bears the N6-(pyridoxal phosphate)lysine mark.

This sequence belongs to the TrpB family. Tetramer of two alpha and two beta chains. It depends on pyridoxal 5'-phosphate as a cofactor.

The catalysed reaction is (1S,2R)-1-C-(indol-3-yl)glycerol 3-phosphate + L-serine = D-glyceraldehyde 3-phosphate + L-tryptophan + H2O. The protein operates within amino-acid biosynthesis; L-tryptophan biosynthesis; L-tryptophan from chorismate: step 5/5. In terms of biological role, the beta subunit is responsible for the synthesis of L-tryptophan from indole and L-serine. The polypeptide is Tryptophan synthase beta chain (Albidiferax ferrireducens (strain ATCC BAA-621 / DSM 15236 / T118) (Rhodoferax ferrireducens)).